Reading from the N-terminus, the 232-residue chain is Large ribosomal subunit protein uL1 (232 aa).

It belongs to the universal ribosomal protein uL1 family. Part of the 50S ribosomal subunit.

Functionally, binds directly to 23S rRNA. The L1 stalk is quite mobile in the ribosome, and is involved in E site tRNA release. Its function is as follows. Protein L1 is also a translational repressor protein, it controls the translation of the L11 operon by binding to its mRNA. In Ruegeria pomeroyi (strain ATCC 700808 / DSM 15171 / DSS-3) (Silicibacter pomeroyi), this protein is Large ribosomal subunit protein uL1.